The chain runs to 622 residues: Palmitoyltransferase ZDHHC13 (622 aa).

Methionine 1 is modified (N-acetylmethionine). Residues 1–291 are Cytoplasmic-facing; it reads MEGPGLGSQC…RLWRWLQKCE (291 aa). 7 ANK repeats span residues 43–78, 81–110, 115–144, 148–177, 181–211, 216–245, and 249–277; these read PLIE…VRQP, ENVS…VVDQ, LNST…DPTL, EGFS…SVNM, NGQT…SLNV, HQNT…SLDI, and KGET…KMRA. Residues 292–312 form a helical membrane-spanning segment; that stretch reads LFLLLMLSVITMWAVGYILDF. The Lumenal portion of the chain corresponds to 313–320; that stretch reads NSDSWLLK. The helical transmembrane segment at 321 to 341 threads the bilayer; that stretch reads GCLLVTLFFLTSLFPRFLVGY. Over 342-347 the chain is Cytoplasmic; that stretch reads KNLVYL. Residues 348–368 form a helical membrane-spanning segment; sequence PTAFLLSSVFWIFMTWFILFF. At 369-370 the chain is on the lumenal side; it reads PD. Residues 371–391 traverse the membrane as a helical segment; the sequence is LAGAPFYFSFIFSIVAFLYFF. The Cytoplasmic portion of the chain corresponds to 392-470; it reads YKTWATDPGF…RCIGFGNHHY (79 aa). Positions 426–476 constitute a DHHC domain; it reads TFCTSCLIRKPLRSLHCHVCNSCVARYDQHCLWTGRCIGFGNHHYYIFFLF. The active-site S-palmitoyl cysteine intermediate is the cysteine 456. The chain crosses the membrane as a helical span at residues 471-491; that stretch reads YIFFLFFLSMVCGWIIYGSFI. Residues 492 to 518 lie on the Lumenal side of the membrane; sequence YWSSHCATTFKEDGLWTYLNQIVACSP. A helical transmembrane segment spans residues 519 to 539; that stretch reads WVLYILMLATFHFSWSTFLLL. Over 540 to 622 the chain is Cytoplasmic; it reads NQLFQIAFLG…PAREKVLRSV (83 aa).

It belongs to the DHHC palmitoyltransferase family. AKR/ZDHHC17 subfamily. Interacts (via ANK repeats) with CLIP3. Interacts (via ANK repeats) with DNAJC5 (via C-terminus). Interacts (via ANK repeats) with HTT. Interacts (via ANK repeats) with MAP6. Interacts (via ANK repeats) with SNAP23. Interacts (via ANK repeats) with SNAP25. May interact (via ANK repeats) with SPRED2.

The protein localises to the golgi apparatus membrane. It localises to the cytoplasmic vesicle membrane. It carries out the reaction L-cysteinyl-[protein] + hexadecanoyl-CoA = S-hexadecanoyl-L-cysteinyl-[protein] + CoA. Functionally, palmitoyltransferase that could catalyze the addition of palmitate onto various protein substrates. Palmitoyltransferase for HTT and GAD2. May play a role in Mg(2+) transport. This is Palmitoyltransferase ZDHHC13 from Pongo abelii (Sumatran orangutan).